The primary structure comprises 228 residues: Tumor necrosis factor receptor superfamily member 18 (228 aa).

Positions 1–19 (MGAWAMLYGVSMLCVLDLG) are cleaved as a signal peptide. Residues 20 to 153 (QPSVVEEPGC…EPLPTEQYGH (134 aa)) lie on the Extracellular side of the membrane. TNFR-Cys repeat units follow at residues 28-61 (GCGP…ERCI), 62-101 (CVTP…FRCV), and 102-142 (ACAM…AVCI). 5 disulfides stabilise this stretch: cysteine 29-cysteine 44, cysteine 62-cysteine 74, cysteine 69-cysteine 82, cysteine 103-cysteine 122, and cysteine 116-cysteine 141. 2 N-linked (GlcNAc...) asparagine glycosylation sites follow: asparagine 36 and asparagine 40. Residues asparagine 121 and asparagine 134 are each glycosylated (N-linked (GlcNAc...) asparagine). Residues 154–174 (LTVIFLVMAACIFFLTTVQLG) form a helical membrane-spanning segment. Residues 175–228 (LHIWQLRRQHMCPRETQPFAEVQLSAEDACSFQFPEEERGEQTEEKCHLGGRWP) are Cytoplasmic-facing.

As to quaternary structure, binds to TRAF1, TRAF2, and TRAF3, but not TRAF5 and TRAF6. Binds through its C-terminus to SIVA1/SIVA. As to expression, preferentially expressed in activated T lymphocytes.

It is found in the cell membrane. The protein localises to the secreted. Its function is as follows. Receptor for TNFSF18. Seems to be involved in interactions between activated T-lymphocytes and endothelial cells and in the regulation of T-cell receptor-mediated cell death. Mediated NF-kappa-B activation via the TRAF2/NIK pathway. This is Tumor necrosis factor receptor superfamily member 18 (Tnfrsf18) from Mus musculus (Mouse).